A 406-amino-acid chain; its full sequence is 12S rRNA N(4)-cytidine methyltransferase METTL15 (406 aa).

A mitochondrion-targeting transit peptide spans 1 to 22 (MLRYPYFYRTYNRLFSHFVDSG). S-adenosyl-L-methionine-binding positions include 100–102 (GGH), Asp-119, Phe-146, Asp-169, and Gln-176. Ser-358 carries the post-translational modification Phosphoserine.

Belongs to the methyltransferase superfamily. RsmH family.

It is found in the mitochondrion matrix. The catalysed reaction is cytidine(839) in 12S rRNA + S-adenosyl-L-methionine = N(4)-methylcytidine(839) in 12S rRNA + S-adenosyl-L-homocysteine + H(+). N4-methylcytidine (m4C) methyltransferase responsible for the methylation of position C839 in mitochondrial 12S rRNA. Involved in the stabilization of 12S rRNA folding, therefore facilitating the assembly of the mitochondrial small ribosomal subunits. This Mus musculus (Mouse) protein is 12S rRNA N(4)-cytidine methyltransferase METTL15.